Here is a 623-residue protein sequence, read N- to C-terminus: MGLVLKEFNNKIRTALILAPFFTFAQIVIDLIIPSFLASAISVVFSIDKLKQDESGGKTISVDFIGGANINFANVREAQIVLATTVILLALCGLFFGLISIYCASYVSANTSFLLRKKIFAKLMRITTPSHDHYGSSTLLVRLTNDVYLMEVIAFDFLRLIIRAPLLFIGGLVFAVTTNQDMSISLLITFPLILLVIGILNRKSIPLFKENQKSVDKINERVEEDVSGYKVIQSFNLHSFTNNKFKIANEGWKKNSTSSLFINSLNIPFTFFLSSLTIIIALLLVFQLDSSVSVDPLPQDAAIRPNIFAFFQYNFYIVLGFILTSLTMVNFNRSRVALGRIKDILSQPEIKTITNKDQKELLPTLEFRNISFGLGNKNNNNFLQNLSFKFEAYKTYGIVGPTGSGKSLIANIIGGLYEPNEGEILIGGEKIQSIDSLYLSEMIGIVFQQNILFKGTISSNIKIGIETRSDWKNQSDLQKNEAMKNAAKIACADTFIEKFSDSYDHNVEQLGKNLSGGQKQRVAIARTLITKPRILVFDDSMSALDALTEKKVRENIENDLKLTTKIIISQNINSIKHADKILVIDNGRIVGFDSDQKLMKNCSLYQKMKESQKDLGGDFDAVN.

Positions 16 to 325 (LILAPFFTFA…YIVLGFILTS (310 aa)) constitute an ABC transmembrane type-1 domain. 6 helical membrane-spanning segments follow: residues 27–47 (IVID…VFSI), 81–101 (VLAT…LISI), 157–177 (FLRL…FAVT), 181–201 (DMSI…GILN), 266–286 (NIPF…LLVF), and 307–327 (IFAF…TSLT). Residues 365 to 611 (LEFRNISFGL…CSLYQKMKES (247 aa)) form the ABC transporter domain. Residue 400 to 407 (GPTGSGKS) participates in ATP binding.

It belongs to the ABC transporter superfamily.

Its subcellular location is the cell membrane. This is Putative ABC transporter ATP-binding protein MG014 from Mycoplasma genitalium (strain ATCC 33530 / DSM 19775 / NCTC 10195 / G37) (Mycoplasmoides genitalium).